The primary structure comprises 2048 residues: Myoferlin (2048 aa).

The C2 1 domain maps to methionine 1–tyrosine 101. Residues methionine 1–lysine 2012 lie on the Cytoplasmic side of the membrane. The interval tyrosine 124–alanine 176 is disordered. A compositionally biased stretch (acidic residues) spans glycine 144 to arginine 156. Phosphoserine occurs at positions 170 and 174. 2 consecutive C2 domains span residues threonine 183–leucine 300 and aspartate 339–threonine 475. The necessary for interaction with EHD2 stretch occupies residues lysine 186–lysine 281. Ca(2+) is bound by residues aspartate 390, aspartate 396, aspartate 444, aspartate 446, and aspartate 452. N6-acetyllysine occurs at positions 540 and 871. C2 domains follow at residues glycine 1110 to histidine 1238 and leucine 1269 to aspartate 1397. Ca(2+) is bound by residues aspartate 1142, aspartate 1148, aspartate 1204, and aspartate 1206. Position 1494 is an N6-acetyllysine (lysine 1494). 2 consecutive C2 domains span residues proline 1523 to glycine 1641 and glycine 1759 to serine 1907. Residues aspartate 1556, aspartate 1562, aspartate 1611, aspartate 1613, aspartate 1878, serine 1881, and aspartate 1884 each coordinate Ca(2+). Residues glutamate 1964–serine 1975 show a composition bias toward basic and acidic residues. Residues glutamate 1964–proline 1986 are disordered. Residues tryptophan 2013 to tyrosine 2033 form a helical membrane-spanning segment. The Extracellular portion of the chain corresponds to serine 2034–alanine 2048.

It belongs to the ferlin family. As to quaternary structure, interacts with EHD1. Interacts with EHD2; the interaction is direct. Interacts with DNM2 and KDR. Interacts with RIPOR2. Requires Ca(2+) as cofactor. In terms of tissue distribution, expressed in myoblasts (at protein level). Expressed in endothelial cells.

It is found in the cell membrane. It localises to the nucleus membrane. The protein localises to the cytoplasmic vesicle membrane. Functionally, calcium/phospholipid-binding protein that plays a role in the plasmalemma repair mechanism of endothelial cells that permits rapid resealing of membranes disrupted by mechanical stress. Involved in endocytic recycling. Implicated in VEGF signal transduction by regulating the levels of the receptor KDR. The protein is Myoferlin (Myof) of Mus musculus (Mouse).